Here is a 127-residue protein sequence, read N- to C-terminus: Large ribosomal subunit protein eL22x (127 aa).

Belongs to the eukaryotic ribosomal protein eL22 family.

The sequence is that of Large ribosomal subunit protein eL22x (RPL22A) from Arabidopsis thaliana (Mouse-ear cress).